Here is a 338-residue protein sequence, read N- to C-terminus: Auxin-responsive protein IAA9 (338 aa).

Residues 1 to 25 form a disordered region; sequence MSPEEELQSNVSVASSSPTSNCISR. The span at 9–21 shows a compositional bias: low complexity; the sequence is SNVSVASSSPTSN. The EAR-like (transcriptional repression) signature appears at 68 to 72; sequence LTLGL. Residues 150–186 are disordered; that stretch reads ATQSVTKKDVPQNIPKGQSSTTNNSSSPPAAKAQIVG. Residues 168 to 180 are compositionally biased toward low complexity; sequence SSTTNNSSSPPAA. The PB1 domain occupies 216–318; sequence ALFVKVSMDG…VCKKLKIMKG (103 aa).

Belongs to the Aux/IAA family. As to quaternary structure, homodimers and heterodimers. Interacts with TPL. Phosphorylated by phytochrome A in vitro. As to expression, highly expressed in the whole plant.

It is found in the nucleus. Its function is as follows. Aux/IAA proteins are short-lived transcriptional factors that function as repressors of early auxin response genes at low auxin concentrations. Repression is thought to result from the interaction with auxin response factors (ARFs), proteins that bind to the auxin-responsive promoter element (AuxRE). Formation of heterodimers with ARF proteins may alter their ability to modulate early auxin response genes expression. This is Auxin-responsive protein IAA9 (IAA9) from Arabidopsis thaliana (Mouse-ear cress).